Consider the following 292-residue polypeptide: Aquaporin-3 (292 aa).

Residues 1 to 24 (MGRQKELVSRCGEMLHIRYRLLRQ) lie on the Cytoplasmic side of the membrane. The chain crosses the membrane as a helical span at residues 25–42 (ALAECLGTLILVMFGCGS). Residues 43–56 (VAQVVLSRGTHGGF) are Extracellular-facing. The chain crosses the membrane as a helical span at residues 57 to 74 (LTINLAFGFAVTLGILIA). Residues 75–78 (GQVS) lie on the Cytoplasmic side of the membrane. Positions 79-92 (GAHLNPAVTFAMCF) form an intramembrane region, discontinuously helical. Positions 83–85 (NPA) match the NPA 1 motif. The Cytoplasmic portion of the chain corresponds to 93-100 (LAREPWIK). The chain crosses the membrane as a helical span at residues 101–121 (LPIYTLAQTLGAFLGAGIVFG). Over 122 to 159 (LYYDAIWHFADNQLFVSGPNGTAGIFATYPSGHLDMIN) the chain is Extracellular. An N-linked (GlcNAc...) asparagine glycan is attached at Asn141. A helical membrane pass occupies residues 160 to 177 (GFFDQFIGTASLIVCVLA). Residues 178 to 189 (IVDPYNNPVPRG) lie on the Cytoplasmic side of the membrane. A helical transmembrane segment spans residues 190-206 (LEAFTVGLVVLVIGTSM). Residues 207–210 (GFNS) lie on the Extracellular side of the membrane. Positions 211–224 (GYAVNPARDFGPRL) form an intramembrane region, discontinuously helical. The short motif at 215–217 (NPA) is the NPA 2 element. The Extracellular segment spans residues 225 to 242 (FTALAGWGSAVFTTGQHW). The helical transmembrane segment at 243–264 (WWVPIVSPLLGSIAGVFVYQLM) threads the bilayer. Over 265–292 (IGCHLEQPPPSNEEENVKLAHVKHKEQI) the chain is Cytoplasmic.

It belongs to the MIP/aquaporin (TC 1.A.8) family. Homotetramer; each monomer provides an independent glycerol/water pore. Could also exist in other oligomeric states. As to expression, widely expressed in epithelial cells of kidney (collecting ducts) and airways, in keratinocytes, immature dendritic cells and erythrocytes. Isoform 2 is not detectable in erythrocytes at the protein level.

The protein localises to the cell membrane. It is found in the basolateral cell membrane. The enzyme catalyses glycerol(in) = glycerol(out). The catalysed reaction is H2O(in) = H2O(out). It carries out the reaction H2O2(out) = H2O2(in). It catalyses the reaction urea(in) = urea(out). Its activity is regulated as follows. Glycerol transport is regulated by pH, with the porin being permeable to glycerol at pH 7.4 but not at pH 5.5. Water permeability, however, is not influenced by pH. Aquaglyceroporins form homotetrameric transmembrane channels, with each monomer independently mediating glycerol and water transport across the plasma membrane along their osmotic gradient. Could also be permeable to urea. Also participates in cell permeability to H2O2 and H2O2-mediated signaling. In skin, transports glycerol to the epidermis and stratum corneum, where it maintains hydration, elasticity, and supports lipid biosynthesis for barrier repair. In kidney, contributes to the reabsorption of water, helping the body maintain proper fluid balance. In Homo sapiens (Human), this protein is Aquaporin-3.